The primary structure comprises 229 residues: PHO85 cyclin-5 (229 aa).

A compositionally biased stretch (basic and acidic residues) spans 1–24; it reads MDGNHRFTPDSKEFNTVVKSKESS. The segment at 1 to 46 is disordered; that stretch reads MDGNHRFTPDSKEFNTVVKSKESSTGRNPYQTPPLEHNGTHHQTNY.

The protein belongs to the cyclin family. PCL1,2 subfamily. As to quaternary structure, forms a cyclin-CDK complex with PHO85.

In terms of biological role, cyclin partner of the cyclin-dependent kinase (CDK) PHO85. Positively controls degradation of transcription factor GCN4 under favorable growth conditions. The PCL5-PHO85 cyclin-CDK holoenzyme phosphorylates GCN4, which is required for its degradation by the E3 ubiquitin ligase complex SCF(Cdc4). Amino acid starvation reduces PCL5-PHO85-associated GCN4 kinase activity and leads to stabilization of GCN4. The sequence is that of PHO85 cyclin-5 (PCL5) from Saccharomyces cerevisiae (strain ATCC 204508 / S288c) (Baker's yeast).